Reading from the N-terminus, the 328-residue chain is Phosphate acyltransferase (328 aa).

This sequence belongs to the PlsX family. Homodimer. Probably interacts with PlsY.

It localises to the cytoplasm. It carries out the reaction a fatty acyl-[ACP] + phosphate = an acyl phosphate + holo-[ACP]. It functions in the pathway lipid metabolism; phospholipid metabolism. Its function is as follows. Catalyzes the reversible formation of acyl-phosphate (acyl-PO(4)) from acyl-[acyl-carrier-protein] (acyl-ACP). This enzyme utilizes acyl-ACP as fatty acyl donor, but not acyl-CoA. The chain is Phosphate acyltransferase from Campylobacter jejuni subsp. jejuni serotype O:2 (strain ATCC 700819 / NCTC 11168).